The primary structure comprises 335 residues: Phenylalanine--tRNA ligase alpha subunit (335 aa).

Glu-262 serves as a coordination point for Mg(2+).

This sequence belongs to the class-II aminoacyl-tRNA synthetase family. Phe-tRNA synthetase alpha subunit type 1 subfamily. In terms of assembly, tetramer of two alpha and two beta subunits. The cofactor is Mg(2+).

The protein resides in the cytoplasm. It catalyses the reaction tRNA(Phe) + L-phenylalanine + ATP = L-phenylalanyl-tRNA(Phe) + AMP + diphosphate + H(+). The polypeptide is Phenylalanine--tRNA ligase alpha subunit (Prochlorococcus marinus (strain NATL2A)).